Here is a 327-residue protein sequence, read N- to C-terminus: GTPase Obg (327 aa).

The Obg domain maps to 1–159 (MKFLDQVKIY…YVIWLQLKTI (159 aa)). The 168-residue stretch at 160–327 (ADVGIVGLPN…IKAKLLSYVS (168 aa)) folds into the OBG-type G domain. GTP contacts are provided by residues 166–173 (GLPNAGKS), 191–195 (FTTLN), 212–215 (DIPG), 279–282 (NKTD), and 308–310 (STL). 2 residues coordinate Mg(2+): S173 and T193.

It belongs to the TRAFAC class OBG-HflX-like GTPase superfamily. OBG GTPase family. As to quaternary structure, monomer. It depends on Mg(2+) as a cofactor.

The protein localises to the cytoplasm. Its function is as follows. An essential GTPase which binds GTP, GDP and possibly (p)ppGpp with moderate affinity, with high nucleotide exchange rates and a fairly low GTP hydrolysis rate. Plays a role in control of the cell cycle, stress response, ribosome biogenesis and in those bacteria that undergo differentiation, in morphogenesis control. This Pelagibacter ubique (strain HTCC1062) protein is GTPase Obg.